The chain runs to 123 residues: Large ribosomal subunit protein uL29y (123 aa).

This sequence belongs to the universal ribosomal protein uL29 family.

The sequence is that of Large ribosomal subunit protein uL29y (RPL35B) from Arabidopsis thaliana (Mouse-ear cress).